Here is an 833-residue protein sequence, read N- to C-terminus: ERAD-associated E3 ubiquitin-protein ligase component HRD3 (833 aa).

Positions 1–20 (MITLLLYLCVICNAIVLIRA) are cleaved as a signal peptide. Asn101, Asn123, and Asn142 each carry an N-linked (GlcNAc...) asparagine glycan. One copy of the Sel1-like 1 repeat lies at 103–139 (SEATYTLSQIHLWSQYNFPHNMTLAHKYLEKFNDLTH). Sel1-like repeat units lie at residues 143–186 (HSAI…QLGN), 187–222 (LKAK…EQLR), 413–445 (GRAC…KTQA), 552–595 (ETAQ…KQGN), 596–627 (IDAG…LKYS), and 628–663 (IQAI…EHDH). Asn429 carries an N-linked (GlcNAc...) asparagine glycan. An N-linked (GlcNAc...) asparagine glycan is attached at Asn611. The helical transmembrane segment at 768-788 (LVTMGCILGIFLLSILMSTLA) threads the bilayer. A disordered region spans residues 805–824 (NGNRQQEQQQQQQAQGPPGW). Low complexity predominate over residues 809-819 (QQEQQQQQQAQ).

Belongs to the sel-1 family. Component of the HRD1 ubiquitin ligase complex which contains the E3 ligase HRD1, its cofactors HRD3, USA1 and DER1, substrate recruiting factor YOS9 and CDC48-binding protein UBX2. Within the complex, interacts directly with HRD1 and YOS9 (via N-terminus). In ERAD-L, HRD3 and YOS9 jointly bind misfolded glycoproteins in the endoplasmic reticulum (ER) lumen. Movement of ERAD-L substrates through the ER membrane is facilitated by HRD1 and DER1 which have lateral gates facing each other and which distort the membrane region between the lateral gates, making it much thinner than a normal phospholipid bilayer. Substrates insert into the membrane as a hairpin loop with one strand interacting with DER1 and the other with HRD1. The HRD1 complex interacts with the heterotrimeric CDC48-NPL4-UFD1 ATPase complex which is recruited by UBX2 via its interaction with CDC48 and which moves ubiquitinated substrates to the cytosol for targeting to the proteasome. The HRD1 complex interacts with the ERAD substrates HMG1 and HMG2. Interacts with KAR2.

It is found in the endoplasmic reticulum membrane. In terms of biological role, component of the endoplasmic reticulum quality control (ERQC) system involved in ubiquitin-dependent degradation of misfolded endoplasmic reticulum proteins. Component of the HRD1 ubiquitin ligase complex, which is part of the ERAD-L and ERAD-M pathways responsible for the rapid degradation of soluble lumenal and membrane proteins with misfolded lumenal domains (ERAD-L), or ER-membrane proteins with misfolded transmembrane domains (ERAD-M). ERAD-L substrates are ubiquitinated through HRD1 in conjunction with the E2 ubiquitin-conjugating enzymes UBC1 and UBC7-CUE1. Ubiquitinated substrates are then removed to the cytosol via the action of the CDC48-NPL4-UFD1 ATPase complex and targeted to the proteasome. ERAD-M substrates are processed by the same HRD1-HRD3 core complex, but only a subset of the other components is required for ERAD-M. Stabilizes the HRD1 ubiquitin-protein ligase. Also functions in recruiting misfolded protein substrates in conjunction with YOS9. This Saccharomyces cerevisiae (strain ATCC 204508 / S288c) (Baker's yeast) protein is ERAD-associated E3 ubiquitin-protein ligase component HRD3 (HRD3).